Reading from the N-terminus, the 502-residue chain is Mannitol dehydrogenase 2 (502 aa).

It belongs to the mannitol dehydrogenase family.

It carries out the reaction D-mannitol + NAD(+) = D-fructose + NADH + H(+). In terms of biological role, catalyzes the NAD(H)-dependent interconversion of D-fructose and D-mannitol in the mannitol metabolic pathway. This chain is Mannitol dehydrogenase 2, found in Saccharomyces cerevisiae (strain ATCC 204508 / S288c) (Baker's yeast).